Consider the following 302-residue polypeptide: Urease accessory protein UreD 1 (302 aa).

It belongs to the UreD family. As to quaternary structure, ureD, UreF and UreG form a complex that acts as a GTP-hydrolysis-dependent molecular chaperone, activating the urease apoprotein by helping to assemble the nickel containing metallocenter of UreC. The UreE protein probably delivers the nickel.

It localises to the cytoplasm. Required for maturation of urease via the functional incorporation of the urease nickel metallocenter. The polypeptide is Urease accessory protein UreD 1 (Psychrobacter cryohalolentis (strain ATCC BAA-1226 / DSM 17306 / VKM B-2378 / K5)).